Here is a 132-residue protein sequence, read N- to C-terminus: Small ribosomal subunit protein uS9 (132 aa).

The segment at 101-132 is disordered; sequence KRAGLLTRDPRMKERKKPGLKAARRSPQFSKR. Positions 113–132 are enriched in basic residues; that stretch reads KERKKPGLKAARRSPQFSKR.

This sequence belongs to the universal ribosomal protein uS9 family.

This is Small ribosomal subunit protein uS9 from Staphylococcus aureus (strain USA300).